A 303-amino-acid polypeptide reads, in one-letter code: 3-methyl-2-oxobutanoate hydroxymethyltransferase (303 aa).

Over residues 1 to 10 (MDSSGTVRNQ) the composition is skewed to polar residues. The segment at 1–41 (MDSSGTVRNQTSDDHSRPADAAGTAATLYGAPAETRSPRRS) is disordered. The Mg(2+) site is built by Asp-84 and Asp-123. 3-methyl-2-oxobutanoate-binding positions include 84-85 (DS), Asp-123, and Lys-153. Glu-155 provides a ligand contact to Mg(2+). Residue Glu-221 is the Proton acceptor of the active site.

It belongs to the PanB family. In terms of assembly, homodecamer; pentamer of dimers. It depends on Mg(2+) as a cofactor.

The protein localises to the cytoplasm. It catalyses the reaction 3-methyl-2-oxobutanoate + (6R)-5,10-methylene-5,6,7,8-tetrahydrofolate + H2O = 2-dehydropantoate + (6S)-5,6,7,8-tetrahydrofolate. The protein operates within cofactor biosynthesis; (R)-pantothenate biosynthesis; (R)-pantoate from 3-methyl-2-oxobutanoate: step 1/2. Its function is as follows. Catalyzes the reversible reaction in which hydroxymethyl group from 5,10-methylenetetrahydrofolate is transferred onto alpha-ketoisovalerate to form ketopantoate. In Frankia alni (strain DSM 45986 / CECT 9034 / ACN14a), this protein is 3-methyl-2-oxobutanoate hydroxymethyltransferase.